Reading from the N-terminus, the 271-residue chain is Putative phosphoenolpyruvate synthase regulatory protein (271 aa).

Gly-151–Thr-158 is a binding site for ADP.

The protein belongs to the pyruvate, phosphate/water dikinase regulatory protein family. PSRP subfamily.

It carries out the reaction [pyruvate, water dikinase] + ADP = [pyruvate, water dikinase]-phosphate + AMP + H(+). It catalyses the reaction [pyruvate, water dikinase]-phosphate + phosphate + H(+) = [pyruvate, water dikinase] + diphosphate. In terms of biological role, bifunctional serine/threonine kinase and phosphorylase involved in the regulation of the phosphoenolpyruvate synthase (PEPS) by catalyzing its phosphorylation/dephosphorylation. The polypeptide is Putative phosphoenolpyruvate synthase regulatory protein (Burkholderia orbicola (strain MC0-3)).